The primary structure comprises 760 residues: Xaa-Pro dipeptidyl-peptidase (760 aa).

Residues serine 349, aspartate 469, and histidine 499 each act as charge relay system in the active site.

The protein belongs to the peptidase S15 family. In terms of assembly, homodimer.

The protein resides in the cytoplasm. The catalysed reaction is Hydrolyzes Xaa-Pro-|- bonds to release unblocked, N-terminal dipeptides from substrates including Ala-Pro-|-p-nitroanilide and (sequentially) Tyr-Pro-|-Phe-Pro-|-Gly-Pro-|-Ile.. In terms of biological role, removes N-terminal dipeptides sequentially from polypeptides having unsubstituted N-termini provided that the penultimate residue is proline. The sequence is that of Xaa-Pro dipeptidyl-peptidase from Streptococcus pyogenes serotype M5 (strain Manfredo).